Here is a 139-residue protein sequence, read N- to C-terminus: S-adenosyl-L-methionine-binding protein AF_0241 (139 aa).

Residues 3 to 133 form the TsaA-like domain; sequence LKPIGVVKSP…YSPEIDCVNQ (131 aa). Residues Gln16, 20–22, 58–59, Arg82, Leu92, and 113–116 each bind S-adenosyl-L-methionine; these read PRQ, DK, and LDGS.

It belongs to the tRNA methyltransferase O family. As to quaternary structure, homodimer.

This is S-adenosyl-L-methionine-binding protein AF_0241 from Archaeoglobus fulgidus (strain ATCC 49558 / DSM 4304 / JCM 9628 / NBRC 100126 / VC-16).